A 950-amino-acid chain; its full sequence is F-box only protein 10 (950 aa).

One can recognise an F-box domain in the interval methionine 1–leucine 48. PbH1 repeat units lie at residues serine 198–glycine 217 and valine 238–glycine 260. Positions isoleucine 313 to glutamate 364 are disordered. Residues glycine 315–cysteine 324 show a composition bias toward polar residues. Phosphoserine occurs at positions 321 and 326. Basic and acidic residues predominate over residues glycine 330 to arginine 342. Positions proline 347–serine 357 are enriched in low complexity. 15 PbH1 repeats span residues valine 423–serine 444, asparagine 467–leucine 489, glutamate 490–lysine 512, lysine 513–glycine 535, asparagine 536–tyrosine 558, histidine 559–glutamate 581, asparagine 582–arginine 604, glycine 605–aspartate 627, glutamate 628–serine 650, serine 651–serine 673, isoleucine 713–serine 735, serine 736–glutamine 758, serine 760–phenylalanine 782, glutamine 783–glycine 805, and arginine 828–glycine 850.

Component of the SCF(FBXO10) complex consisting of CUL1, SKP1 and FBXO10. Interacts with BCL2. Interacts with PRDM1. In terms of tissue distribution, particularly highly expressed in B-cells.

The protein resides in the cytoplasm. It participates in protein modification; protein ubiquitination. In terms of biological role, substrate-recognition component of the SCF (SKP1-CUL1-F-box protein)-type E3 ubiquitin ligase complex. Mediates the ubiquitination and degradation of BCL2, an antiapoptotic protein, thereby playing a role in apoptosis by controlling the stability of BCL2. Targets also the receptor for advanced glycation end products RAGE for ubiquitination and subsequent lysosomal degradation. Directly controls HGAL/GCSAM ubiquitination and degradation and thereby decreases BCR signaling. This chain is F-box only protein 10 (Fbxo10), found in Mus musculus (Mouse).